Here is a 243-residue protein sequence, read N- to C-terminus: DNA repair protein RecO (243 aa).

It belongs to the RecO family.

Its function is as follows. Involved in DNA repair and RecF pathway recombination. This Hyphomonas neptunium (strain ATCC 15444) protein is DNA repair protein RecO.